A 216-amino-acid polypeptide reads, in one-letter code: Pyridoxine/pyridoxamine 5'-phosphate oxidase (216 aa).

Residues Arg9 to Tyr12 and Arg67 each bind substrate. Residues Arg62 to Arg67, Tyr77 to Thr78, Lys84, and Gln106 contribute to the FMN site. Residues Tyr124, Arg128, and Ser132 each coordinate substrate. Residues Gln142–Ser143 and Trp188 each bind FMN. Arg194 to His196 is a substrate binding site. Arg198 contributes to the FMN binding site.

The protein belongs to the pyridoxamine 5'-phosphate oxidase family. Homodimer. The cofactor is FMN.

The catalysed reaction is pyridoxamine 5'-phosphate + O2 + H2O = pyridoxal 5'-phosphate + H2O2 + NH4(+). It carries out the reaction pyridoxine 5'-phosphate + O2 = pyridoxal 5'-phosphate + H2O2. Its pathway is cofactor metabolism; pyridoxal 5'-phosphate salvage; pyridoxal 5'-phosphate from pyridoxamine 5'-phosphate: step 1/1. It functions in the pathway cofactor metabolism; pyridoxal 5'-phosphate salvage; pyridoxal 5'-phosphate from pyridoxine 5'-phosphate: step 1/1. In terms of biological role, catalyzes the oxidation of either pyridoxine 5'-phosphate (PNP) or pyridoxamine 5'-phosphate (PMP) into pyridoxal 5'-phosphate (PLP). The chain is Pyridoxine/pyridoxamine 5'-phosphate oxidase from Psychrobacter arcticus (strain DSM 17307 / VKM B-2377 / 273-4).